Consider the following 609-residue polypeptide: Manganese lipoxygenase (609 aa).

The first 16 residues, 1–16, serve as a signal peptide directing secretion; that stretch reads MRLLLSIAGLTTVVNA. 4 N-linked (GlcNAc...) asparagine glycosylation sites follow: N24, N115, N156, and N193. The Lipoxygenase domain occupies 117-609; that stretch reads SLKAIQDHGG…PGVIPFYLSV (493 aa). Residues H289 and H294 each coordinate Mn(2+). A glycan (N-linked (GlcNAc...) asparagine) is linked at N385. Positions 474 and 478 each coordinate Mn(2+). N-linked (GlcNAc...) asparagine glycosylation occurs at N539. V609 provides a ligand contact to Mn(2+).

The protein belongs to the lipoxygenase family. Manganese lipoxygenase subfamily. The cofactor is Mn(2+). Post-translationally, N- and O-glycosylated.

The protein resides in the secreted. It catalyses the reaction (9Z,12Z)-octadecadienoate + O2 = (9S)-hydroperoxy-(10E,12Z)-octadecadienoate. It carries out the reaction (9Z,12Z)-octadecadienoate + O2 = (11S)-hydroperoxy-(9Z,12Z)-octadecadienoate. The enzyme catalyses (9Z,12Z)-octadecadienoate + O2 = (13R)-hydroperoxy-(9Z,11E)-octadecadienoate. The catalysed reaction is (9Z,12Z,15Z)-octadecatrienoate + O2 = (11R)-hydroperoxy-(9Z,12Z,15Z)-octadecatrienoate. Its function is as follows. Lipoxygenase that metabolizes linoleic and alpha-linolenic acids to 9-, 11- and 13-hydroperoxy fatty acids. Oxidizes linoleic acid to mainly 9S- and 13R-HPODE and alpha-linolenic acid to 11R-HPOTrE. The sequence is that of Manganese lipoxygenase from Colletotrichum gloeosporioides (strain Cg-14) (Anthracnose fungus).